The following is a 169-amino-acid chain: Calfumirin-1 (169 aa).

4 EF-hand domains span residues 6 to 41 (NIVE…KKAF), 42 to 77 (NPER…DKAL), 93 to 128 (EVEE…TGAK), and 129 to 164 (DPEK…VQKL). Positions 19, 21, 23, 25, 30, 55, 57, 59, 61, 66, 108, 110, 112, 117, 142, 144, 146, 148, and 153 each coordinate Ca(2+).

Its function is as follows. May be involved in the phase-shift of cells from growth to differentiation. The sequence is that of Calfumirin-1 (cafA) from Dictyostelium discoideum (Social amoeba).